A 378-amino-acid polypeptide reads, in one-letter code: Dual-specificity RNA methyltransferase RlmN (378 aa).

Glu95 acts as the Proton acceptor in catalysis. The Radical SAM core domain occupies 101–345 (EETRGTLCVS…TTIRKTRGDD (245 aa)). Cys108 and Cys350 are joined by a disulfide. The [4Fe-4S] cluster site is built by Cys115, Cys119, and Cys122. Residues 176–177 (GE), Ser208, 230–232 (SLH), and Asn307 each bind S-adenosyl-L-methionine. Cys350 functions as the S-methylcysteine intermediate in the catalytic mechanism.

Belongs to the radical SAM superfamily. RlmN family. It depends on [4Fe-4S] cluster as a cofactor.

It localises to the cytoplasm. The enzyme catalyses adenosine(2503) in 23S rRNA + 2 reduced [2Fe-2S]-[ferredoxin] + 2 S-adenosyl-L-methionine = 2-methyladenosine(2503) in 23S rRNA + 5'-deoxyadenosine + L-methionine + 2 oxidized [2Fe-2S]-[ferredoxin] + S-adenosyl-L-homocysteine. The catalysed reaction is adenosine(37) in tRNA + 2 reduced [2Fe-2S]-[ferredoxin] + 2 S-adenosyl-L-methionine = 2-methyladenosine(37) in tRNA + 5'-deoxyadenosine + L-methionine + 2 oxidized [2Fe-2S]-[ferredoxin] + S-adenosyl-L-homocysteine. Its function is as follows. Specifically methylates position 2 of adenine 2503 in 23S rRNA and position 2 of adenine 37 in tRNAs. m2A2503 modification seems to play a crucial role in the proofreading step occurring at the peptidyl transferase center and thus would serve to optimize ribosomal fidelity. This is Dual-specificity RNA methyltransferase RlmN from Burkholderia thailandensis (strain ATCC 700388 / DSM 13276 / CCUG 48851 / CIP 106301 / E264).